Consider the following 306-residue polypeptide: 33 kDa chaperonin (306 aa).

Cystine bridges form between cysteine 242/cysteine 244 and cysteine 275/cysteine 278.

Belongs to the HSP33 family. In terms of processing, under oxidizing conditions two disulfide bonds are formed involving the reactive cysteines. Under reducing conditions zinc is bound to the reactive cysteines and the protein is inactive.

The protein localises to the cytoplasm. In terms of biological role, redox regulated molecular chaperone. Protects both thermally unfolding and oxidatively damaged proteins from irreversible aggregation. Plays an important role in the bacterial defense system toward oxidative stress. This is 33 kDa chaperonin from Gloeobacter violaceus (strain ATCC 29082 / PCC 7421).